We begin with the raw amino-acid sequence, 688 residues long: Elongation factor G (688 aa).

One can recognise a tr-type G domain in the interval 8–282; that stretch reads EKFRNIGIMA…AVVDFMPSPL (275 aa). GTP-binding positions include 17 to 24, 81 to 85, and 135 to 138; these read AHIDAGKT, DTPGH, and NKMD. A disordered region spans residues 282 to 305; the sequence is LDIPPIKGTDPETGEETDRPADDN.

This sequence belongs to the TRAFAC class translation factor GTPase superfamily. Classic translation factor GTPase family. EF-G/EF-2 subfamily.

The protein resides in the cytoplasm. Catalyzes the GTP-dependent ribosomal translocation step during translation elongation. During this step, the ribosome changes from the pre-translocational (PRE) to the post-translocational (POST) state as the newly formed A-site-bound peptidyl-tRNA and P-site-bound deacylated tRNA move to the P and E sites, respectively. Catalyzes the coordinated movement of the two tRNA molecules, the mRNA and conformational changes in the ribosome. The polypeptide is Elongation factor G (Clostridium kluyveri (strain NBRC 12016)).